The sequence spans 390 residues: Transforming growth factor beta-1 proprotein (390 aa).

Positions 1 to 29 are cleaved as a signal peptide; sequence MPPSRLRLLPLLLPLLWLLVLAPGRPASG. Residues 30-74 are straightjacket domain; it reads LSTCKTIDMELVKRKRIEAIRGQILSKLRLASPPSQGDVPPGPLP. The arm domain stretch occupies residues 75-271; the sequence is EAVLALYNST…ATPLERAQHL (197 aa). N-linked (GlcNAc...) asparagine glycosylation is found at Asn82, Asn136, and Asn176. The segment at 226–252 is bowtie tail; it reads DSKDNTLRVEINGIGPKRRGDLAAIHG. Positions 244-246 match the Cell attachment site motif; sequence RGD. Cystine bridges form between Cys285/Cys294, Cys293/Cys356, Cys322/Cys387, and Cys326/Cys389.

This sequence belongs to the TGF-beta family. In terms of assembly, homodimer; disulfide-linked. Interacts with the serine proteases, HTRA1 and HTRA3: the interaction with either inhibits TGFB1-mediated signaling and the HTRA protease activity is required for this inhibition. May interact with THSD4; this interaction may lead to sequestration by FBN1 microfibril assembly and attenuation of TGFB signaling. Interacts with CD109, DPT and ASPN. Interacts with EFEMP2. Interacts with TSKU; the interaction contributes to regulation of the hair cycle. Interacts with TGFBR3. Homodimer; disulfide-linked. Interacts with transforming growth factor beta-1 (TGF-beta-1) chain; interaction is non-covalent and maintains TGF-beta-1 in a latent state; each latency-associated peptide (LAP) monomer interacts with TGF-beta-1 in the other monomer. Interacts with LTBP1; leading to regulation of TGF-beta-1 activation. Interacts with LRRC32/GARP; leading to regulation of TGF-beta-1 activation on the surface of activated regulatory T-cells (Tregs). Interacts with LRRC33/NRROS; leading to regulation of TGF-beta-1 in macrophages and microglia. Interacts (via cell attachment site) with integrins ITGAV and ITGB6 (ITGAV:ITGB6), leading to release of the active TGF-beta-1. Interacts with NREP; the interaction results in a decrease in TGFB1 autoinduction. Interacts with HSP90AB1; inhibits latent TGFB1 activation. As to quaternary structure, homodimer; disulfide-linked. Interacts with TGF-beta receptors (TGFBR1 and TGFBR2), leading to signal transduction. Transforming growth factor beta-1 proprotein: The precursor proprotein is cleaved in the Golgi apparatus by FURIN to form Transforming growth factor beta-1 (TGF-beta-1) and Latency-associated peptide (LAP) chains, which remain non-covalently linked, rendering TGF-beta-1 inactive. In terms of processing, N-glycosylated. Deglycosylation leads to activation of Transforming growth factor beta-1 (TGF-beta-1); mechanisms triggering deglycosylation-driven activation of TGF-beta-1 are however unclear.

It localises to the secreted. The protein resides in the extracellular space. It is found in the extracellular matrix. Its function is as follows. Transforming growth factor beta-1 proprotein: Precursor of the Latency-associated peptide (LAP) and Transforming growth factor beta-1 (TGF-beta-1) chains, which constitute the regulatory and active subunit of TGF-beta-1, respectively. In terms of biological role, required to maintain the Transforming growth factor beta-1 (TGF-beta-1) chain in a latent state during storage in extracellular matrix. Associates non-covalently with TGF-beta-1 and regulates its activation via interaction with 'milieu molecules', such as LTBP1, LRRC32/GARP and LRRC33/NRROS, that control activation of TGF-beta-1. Interaction with LRRC33/NRROS regulates activation of TGF-beta-1 in macrophages and microglia. Interaction with LRRC32/GARP controls activation of TGF-beta-1 on the surface of activated regulatory T-cells (Tregs). Interaction with integrins (ITGAV:ITGB6 or ITGAV:ITGB8) results in distortion of the Latency-associated peptide chain and subsequent release of the active TGF-beta-1. Multifunctional protein that regulates the growth and differentiation of various cell types and is involved in various processes, such as normal development, immune function, microglia function and responses to neurodegeneration. Activation into mature form follows different steps: following cleavage of the proprotein in the Golgi apparatus, Latency-associated peptide (LAP) and Transforming growth factor beta-1 (TGF-beta-1) chains remain non-covalently linked rendering TGF-beta-1 inactive during storage in extracellular matrix. At the same time, LAP chain interacts with 'milieu molecules', such as LTBP1, LRRC32/GARP and LRRC33/NRROS that control activation of TGF-beta-1 and maintain it in a latent state during storage in extracellular milieus. TGF-beta-1 is released from LAP by integrins (ITGAV:ITGB6 or ITGAV:ITGB8): integrin-binding to LAP stabilizes an alternative conformation of the LAP bowtie tail and results in distortion of the LAP chain and subsequent release of the active TGF-beta-1. Once activated following release of LAP, TGF-beta-1 acts by binding to TGF-beta receptors (TGFBR1 and TGFBR2), which transduce signal. While expressed by many cells types, TGF-beta-1 only has a very localized range of action within cell environment thanks to fine regulation of its activation by Latency-associated peptide chain (LAP) and 'milieu molecules'. Plays an important role in bone remodeling: acts as a potent stimulator of osteoblastic bone formation, causing chemotaxis, proliferation and differentiation in committed osteoblasts. Can promote either T-helper 17 cells (Th17) or regulatory T-cells (Treg) lineage differentiation in a concentration-dependent manner. At high concentrations, leads to FOXP3-mediated suppression of RORC and down-regulation of IL-17 expression, favoring Treg cell development. At low concentrations in concert with IL-6 and IL-21, leads to expression of the IL-17 and IL-23 receptors, favoring differentiation to Th17 cells. Stimulates sustained production of collagen through the activation of CREB3L1 by regulated intramembrane proteolysis (RIP). Mediates SMAD2/3 activation by inducing its phosphorylation and subsequent translocation to the nucleus. Positively regulates odontoblastic differentiation in dental papilla cells, via promotion of IPO7-mediated translocation of phosphorylated SMAD2 to the nucleus and subsequent transcription of target genes. Can induce epithelial-to-mesenchymal transition (EMT) and cell migration in various cell types. In Cavia porcellus (Guinea pig), this protein is Transforming growth factor beta-1 proprotein (TGFB1).